The primary structure comprises 311 residues: Nod factor export ATP-binding protein I (311 aa).

The 231-residue stretch at 13-243 folds into the ABC transporter domain; the sequence is IDLAGVSKSY…QIGCPVIEIY (231 aa). Position 45 to 52 (45 to 52) interacts with ATP; that stretch reads GPNGAGKS.

Belongs to the ABC transporter superfamily. Lipooligosaccharide exporter (TC 3.A.1.102) family. In terms of assembly, the complex is composed of two ATP-binding proteins (NodI) and two transmembrane proteins (NodJ).

Its subcellular location is the cell inner membrane. Part of the ABC transporter complex NodIJ involved in the export of the nodulation factors (Nod factors), the bacterial signal molecules that induce symbiosis and subsequent nodulation induction. Nod factors are LCO (lipo-chitin oligosaccharide), a modified beta-1,4-linked N-acetylglucosamine oligosaccharide. This subunit is responsible for energy coupling to the transport system. This Rhizobium johnstonii (strain DSM 114642 / LMG 32736 / 3841) (Rhizobium leguminosarum bv. viciae) protein is Nod factor export ATP-binding protein I.